Here is a 73-residue protein sequence, read N- to C-terminus: Antitoxin VapB2 (73 aa).

As to quaternary structure, forms a homodimer, which binds to a toxin homodimer, which then oligomerizes further to a hetero-octamer. When bound to toxin VapC2 the toxin activity is inhibited; 1 antitoxin may suffice to inhibit toxin.

Antitoxin component of a type II toxin-antitoxin (TA) system. Upon expression in M.smegmatis neutralizes the effect of cognate toxin VapC2. The C-terminal helix of the antitoxin may obstruct the toxin's RNA-binding groove, blocking access to the active sites. Additionally, the C-terminal arginine of the antitoxin may remove Mg(2+) ions from the toxin active sites. The sequence is that of Antitoxin VapB2 (vapB2) from Mycobacterium tuberculosis (strain ATCC 25618 / H37Rv).